A 673-amino-acid polypeptide reads, in one-letter code: UvrABC system protein B (673 aa).

Residues 26–183 (EGLEDGLAHQ…RRLAELQYAR (158 aa)) enclose the Helicase ATP-binding domain. ATP is bound at residue 39–46 (GVTGSGKT). A Beta-hairpin motif is present at residues 92 to 115 (YYDYYQPEAYVPSSDTFIEKDASV). The Helicase C-terminal domain occupies 431-597 (QVDDLLSEIR…GLNKKVVDIL (167 aa)). The disordered stretch occupies residues 608-627 (AKGRGKSRPIVEPDNVPMDM). The 36-residue stretch at 633-668 (QQKIHELEGLMMQHAQNLEFEEAAQIRDQLHQLRDL) folds into the UVR domain.

The protein belongs to the UvrB family. In terms of assembly, forms a heterotetramer with UvrA during the search for lesions. Interacts with UvrC in an incision complex.

The protein localises to the cytoplasm. Functionally, the UvrABC repair system catalyzes the recognition and processing of DNA lesions. A damage recognition complex composed of 2 UvrA and 2 UvrB subunits scans DNA for abnormalities. Upon binding of the UvrA(2)B(2) complex to a putative damaged site, the DNA wraps around one UvrB monomer. DNA wrap is dependent on ATP binding by UvrB and probably causes local melting of the DNA helix, facilitating insertion of UvrB beta-hairpin between the DNA strands. Then UvrB probes one DNA strand for the presence of a lesion. If a lesion is found the UvrA subunits dissociate and the UvrB-DNA preincision complex is formed. This complex is subsequently bound by UvrC and the second UvrB is released. If no lesion is found, the DNA wraps around the other UvrB subunit that will check the other stand for damage. This is UvrABC system protein B from Escherichia coli O7:K1 (strain IAI39 / ExPEC).